Here is a 40-residue protein sequence, read N- to C-terminus: Photosystem II reaction center protein J (40 aa).

Residues 8 to 28 traverse the membrane as a helical segment; sequence IPLWIIGTVAGILVIGLIGIF.

This sequence belongs to the PsbJ family. As to quaternary structure, PSII is composed of 1 copy each of membrane proteins PsbA, PsbB, PsbC, PsbD, PsbE, PsbF, PsbH, PsbI, PsbJ, PsbK, PsbL, PsbM, PsbT, PsbX, PsbY, PsbZ, Psb30/Ycf12, at least 3 peripheral proteins of the oxygen-evolving complex and a large number of cofactors. It forms dimeric complexes.

It is found in the plastid. The protein resides in the chloroplast thylakoid membrane. In terms of biological role, one of the components of the core complex of photosystem II (PSII). PSII is a light-driven water:plastoquinone oxidoreductase that uses light energy to abstract electrons from H(2)O, generating O(2) and a proton gradient subsequently used for ATP formation. It consists of a core antenna complex that captures photons, and an electron transfer chain that converts photonic excitation into a charge separation. This chain is Photosystem II reaction center protein J, found in Nicotiana sylvestris (Wood tobacco).